A 195-amino-acid polypeptide reads, in one-letter code: Molybdenum cofactor guanylyltransferase (195 aa).

GTP is bound by residues Leu10–Gly12, Lys23, Asn51, Asp69, and Asp99. Asp99 contacts Mg(2+).

This sequence belongs to the MobA family. Monomer. Mg(2+) is required as a cofactor.

It localises to the cytoplasm. The catalysed reaction is Mo-molybdopterin + GTP + H(+) = Mo-molybdopterin guanine dinucleotide + diphosphate. Its function is as follows. Transfers a GMP moiety from GTP to Mo-molybdopterin (Mo-MPT) cofactor (Moco or molybdenum cofactor) to form Mo-molybdopterin guanine dinucleotide (Mo-MGD) cofactor. The protein is Molybdenum cofactor guanylyltransferase of Histophilus somni (strain 2336) (Haemophilus somnus).